An 840-amino-acid chain; its full sequence is Intracellular phospholipase A1 (840 aa).

Disordered regions lie at residues 1-142 (MSGS…RRRK) and 666-718 (KKNK…AANA). Positions 26–39 (GKVKQKEKPKEKQM) are enriched in basic and acidic residues. Low complexity predominate over residues 97–111 (SRPSGLPSNGNPGSS). The region spanning 564-827 (LEFKVKYLFA…ALFLANVLYC (264 aa)) is the DDHD domain. The span at 668–680 (NKDDKTADARSGG) shows a compositional bias: basic and acidic residues. Residues 681–694 (DDENEDEDECDSDE) are compositionally biased toward acidic residues.

It belongs to the PA-PLA1 family.

The enzyme catalyses 1,2-dihexadecanoyl-sn-glycero-3-phospho-(1D-myo-inositol) + H2O = 2-hexadecanoyl-sn-glycero-3-phospho-(1D-myo-inositol) + hexadecanoate + H(+). The catalysed reaction is a 1,2-diacyl-sn-glycero-3-phospho-L-serine + H2O = a 2-acyl-sn-glycero-3-phospho-L-serine + a fatty acid + H(+). It catalyses the reaction 1-hexadecanoyl-2-(9Z-octadecenoyl)-sn-glycero-3-phospho-L-serine + H2O = 2-(9Z-octadecenoyl)-sn-glycero-3-phospho-L-serine + hexadecanoate + H(+). It carries out the reaction 1,2-di-(9Z-octadecenoyl)-sn-glycero-3-phosphocholine + H2O = (9Z-octadecenoyl)-sn-glycero-3-phosphocholine + (9Z)-octadecenoate + H(+). The enzyme catalyses a 1,2-diacyl-sn-glycero-3-phosphocholine + H2O = a 1-acyl-sn-glycero-3-phosphocholine + a fatty acid + H(+). The catalysed reaction is 1,2-dihexadecanoyl-sn-glycero-3-phosphocholine + H2O = 1-hexadecanoyl-sn-glycero-3-phosphocholine + hexadecanoate + H(+). Its activity is regulated as follows. Inhibited by E-6-bromomethylene-3-1-naphthalenyl-2H-tetrahydropyran-2-one (BEL) in vitro. Its function is as follows. Hydrolyzes the ester bond at the sn-1 position of glycerophospholipids and produces 2-acyl lysophospholipids, being phosphatidylinositol (PI) its major substrate. PI is a versatile lipid that not only serves as a structural component of cellular membranes, but also plays important roles in signal transduction through distinct phosphorylated derivatives of the inositol head group. Catalyzes the hydrolysis of phosphatidylcholine at sn-2 position in vitro. Regulates asymmetric division, an important property of stem cells in C.elegans, by controlling the subcellular localizations of beta-catenin. The sequence is that of Intracellular phospholipase A1 from Caenorhabditis elegans.